The primary structure comprises 431 residues: Adenylosuccinate synthetase (431 aa).

GTP-binding positions include 12–18 (GDEGKGK) and 40–42 (GHT). Asp13 (proton acceptor) is an active-site residue. The Mg(2+) site is built by Asp13 and Gly40. Residues 13–16 (DEGK), 38–41 (NAGH), Thr128, Arg142, Gln223, Thr238, and Arg301 contribute to the IMP site. His41 (proton donor) is an active-site residue. 297 to 303 (TVTGRPR) contributes to the substrate binding site. GTP is bound by residues Arg303, 329–331 (SID), and 411–413 (SVG).

Belongs to the adenylosuccinate synthetase family. In terms of assembly, homodimer. Mg(2+) serves as cofactor.

Its subcellular location is the cytoplasm. It catalyses the reaction IMP + L-aspartate + GTP = N(6)-(1,2-dicarboxyethyl)-AMP + GDP + phosphate + 2 H(+). Its pathway is purine metabolism; AMP biosynthesis via de novo pathway; AMP from IMP: step 1/2. Functionally, plays an important role in the de novo pathway of purine nucleotide biosynthesis. Catalyzes the first committed step in the biosynthesis of AMP from IMP. The polypeptide is Adenylosuccinate synthetase (Lacticaseibacillus paracasei (strain ATCC 334 / BCRC 17002 / CCUG 31169 / CIP 107868 / KCTC 3260 / NRRL B-441) (Lactobacillus paracasei)).